A 26-amino-acid polypeptide reads, in one-letter code: RNEEERLINHLFKERGYNKELRPAQT.

This sequence belongs to the ligand-gated ion channel (TC 1.A.9) family. Acetylcholine receptor (TC 1.A.9.1) subfamily. In terms of assembly, pentamer of two alpha chains, and one each of the beta, delta, and gamma chains.

It localises to the postsynaptic cell membrane. It is found in the cell membrane. The enzyme catalyses K(+)(in) = K(+)(out). It catalyses the reaction Na(+)(in) = Na(+)(out). Its function is as follows. After binding acetylcholine, the AChR responds by an extensive change in conformation that affects all subunits and leads to opening of an ion-conducting channel across the plasma membrane. This Electrophorus electricus (Electric eel) protein is Acetylcholine receptor subunit delta (chrnd).